The primary structure comprises 150 residues: UPF0178 protein ECA0873 (150 aa).

This sequence belongs to the UPF0178 family.

This chain is UPF0178 protein ECA0873, found in Pectobacterium atrosepticum (strain SCRI 1043 / ATCC BAA-672) (Erwinia carotovora subsp. atroseptica).